Consider the following 550-residue polypeptide: Hydroxylamine reductase (550 aa).

[2Fe-2S] cluster is bound by residues Cys3, Cys6, Cys18, and Cys25. Hybrid [4Fe-2O-2S] cluster contacts are provided by His249, Glu273, Cys317, Cys405, Cys433, Cys458, Glu492, and Lys494. Cys405 bears the Cysteine persulfide mark.

It belongs to the HCP family. Requires [2Fe-2S] cluster as cofactor. The cofactor is hybrid [4Fe-2O-2S] cluster.

The protein localises to the cytoplasm. It catalyses the reaction A + NH4(+) + H2O = hydroxylamine + AH2 + H(+). In terms of biological role, catalyzes the reduction of hydroxylamine to form NH(3) and H(2)O. This is Hydroxylamine reductase from Escherichia coli O6:K15:H31 (strain 536 / UPEC).